Here is a 117-residue protein sequence, read N- to C-terminus: Immunoglobulin lambda variable 7-43 (117 aa).

Positions 1-19 (MAWTPLFLFLLTCCPGSNS) are cleaved as a signal peptide. Residues 20 to 44 (QTVVTQEPSLTVSPGGTVTLTCASS) form a framework-1 region. An Ig-like domain is found at 20–117 (QTVVTQEPSL…YCLLYYGGAQ (98 aa)). Cysteine 41 and cysteine 109 form a disulfide bridge. Residues 45 to 53 (TGAVTSGYY) are complementarity-determining-1. A framework-2 region spans residues 54–70 (PNWFQQKPGQAPRALIY). Residues 71-73 (STS) are complementarity-determining-2. Positions 74 to 109 (NKHSWTPARFSGSLLGGKAALTLSGVQPEDEAEYYC) are framework-3. Residues 110-117 (LLYYGGAQ) form a complementarity-determining-3 region.

Immunoglobulins are composed of two identical heavy chains and two identical light chains; disulfide-linked.

The protein localises to the secreted. It is found in the cell membrane. V region of the variable domain of immunoglobulin light chains that participates in the antigen recognition. Immunoglobulins, also known as antibodies, are membrane-bound or secreted glycoproteins produced by B lymphocytes. In the recognition phase of humoral immunity, the membrane-bound immunoglobulins serve as receptors which, upon binding of a specific antigen, trigger the clonal expansion and differentiation of B lymphocytes into immunoglobulins-secreting plasma cells. Secreted immunoglobulins mediate the effector phase of humoral immunity, which results in the elimination of bound antigens. The antigen binding site is formed by the variable domain of one heavy chain, together with that of its associated light chain. Thus, each immunoglobulin has two antigen binding sites with remarkable affinity for a particular antigen. The variable domains are assembled by a process called V-(D)-J rearrangement and can then be subjected to somatic hypermutations which, after exposure to antigen and selection, allow affinity maturation for a particular antigen. This Homo sapiens (Human) protein is Immunoglobulin lambda variable 7-43.